The primary structure comprises 229 residues: Peroxiredoxin 1 (229 aa).

Positions 33-192 (LGPKNKAPDF…AFRTLKAFQF (160 aa)) constitute a Thioredoxin domain. Residue Cys78 is the Cysteine sulfenic acid (-SOH) intermediate of the active site.

This sequence belongs to the peroxiredoxin family. AhpC/Prx1 subfamily. In terms of assembly, homodimer; disulfide-linked, upon oxidation.

The enzyme catalyses a hydroperoxide + [thioredoxin]-dithiol = an alcohol + [thioredoxin]-disulfide + H2O. Thiol-specific peroxidase that catalyzes the reduction of hydrogen peroxide and organic hydroperoxides to water and alcohols, respectively. Plays a role in cell protection against oxidative stress by detoxifying peroxides and as sensor of hydrogen peroxide-mediated signaling events. This Brugia malayi (Filarial nematode worm) protein is Peroxiredoxin 1 (TSA1).